The sequence spans 160 residues: MMPAKLQLDVLRTLQSSARHGTQTLKNSNFLERFHKDRIVFCLPFFPALFFVPVQKVLQHLCLRFTQVAPYFIIQLFDLPSRHAENLAPLLASCRIQYTNCFSSSSNGQVPSIISLYLRVDLSPFYAKKFQIPYRVPMIWLDVFQVFFVFLVISQHSLHS.

Helical transmembrane passes span 39-59 (IVFC…KVLQ) and 136-156 (VPMI…ISQH).

It belongs to the UPF0479 family.

It localises to the membrane. The protein is Putative UPF0479 protein YNL339W-B of Saccharomyces cerevisiae (strain ATCC 204508 / S288c) (Baker's yeast).